A 244-amino-acid chain; its full sequence is Probable transcriptional regulatory protein Xfasm12_1059 (244 aa).

Belongs to the TACO1 family.

It localises to the cytoplasm. This is Probable transcriptional regulatory protein Xfasm12_1059 from Xylella fastidiosa (strain M12).